Consider the following 519-residue polypeptide: B3 domain-containing protein Os03g0620400 (519 aa).

Positions 26-119 (MKCFHLQMSA…RFEVLILDSD (94 aa)) form a DNA-binding region, TF-B3 1. The interval 138–218 (ERNAAPVDIS…DPQMPPGRNY (81 aa)) is disordered. The segment covering 189 to 209 (SGEEGTDSSTSEDESSYELDD) has biased composition (acidic residues). DNA-binding regions (TF-B3) lie at residues 249-349 (VAIM…LRET) and 416-516 (YVSI…IRRN).

It is found in the nucleus. The polypeptide is B3 domain-containing protein Os03g0620400 (Oryza sativa subsp. japonica (Rice)).